The sequence spans 498 residues: MDSPTNDGTCDAHPVTDEPFIDVRETHTAVVVLAGDRAFKAKKPVVTDFCDFRTAEQRERACIREFELNSRLAAQSYLGIAHLSDPSGGHAEPVVVMRRYRDKQRLASMVTAGLPVEGALDAIAEVLARFHQRAQRNRCIDTQGEVGAVARRWHENLAELRHHADKVVSGDVIRRIEHMVDEFVSGREVLFAGRIKEGCIVDGHADLLADDIFLVDGEPALLDCLEFEDELRYLDRIDDAAFLAMDLEFLGRKDLGDYFLAGYAVRSGDTAPASLRDFYIAYRAVVRAKVECVRFSQGKPEAAADAVRHLIIATQHLQHATVRLALVGGNPGTGKSTLARGVAELVGAQVISTDDVRRRLRDCGVITGEPGVLDSGLYSRANVVAVYQEALRKARLLLGSGHSVILDGTWGDPQMRACARRLAADTHSAIVEFRCSATVDVMADRIVARAGGNSDATAEIAAALAARQADWDTGHRIDTAGPRERSVGQAYHIWRSAI.

Residue 329-336 participates in ATP binding; that stretch reads GNPGTGKS.

The protein resides in the secreted. The protein localises to the cell wall. This is an uncharacterized protein from Mycobacterium tuberculosis (strain CDC 1551 / Oshkosh).